Reading from the N-terminus, the 364-residue chain is Cobalt-precorrin-5B C(1)-methyltransferase (364 aa).

It belongs to the CbiD family.

The enzyme catalyses Co-precorrin-5B + S-adenosyl-L-methionine = Co-precorrin-6A + S-adenosyl-L-homocysteine. Its pathway is cofactor biosynthesis; adenosylcobalamin biosynthesis; cob(II)yrinate a,c-diamide from sirohydrochlorin (anaerobic route): step 6/10. Functionally, catalyzes the methylation of C-1 in cobalt-precorrin-5B to form cobalt-precorrin-6A. This Pseudomonas putida (strain GB-1) protein is Cobalt-precorrin-5B C(1)-methyltransferase.